Consider the following 569-residue polypeptide: Vacuolar protein sorting-associated protein 53 B (569 aa).

3 coiled-coil regions span residues 53–90 (TRAK…VQDI), 125–145 (QVMT…AINE), and 295–316 (KEKS…FERE).

The protein belongs to the VPS53 family. As to quaternary structure, component of the Golgi-associated retrograde protein (GARP) complex.

The protein resides in the cytoplasm. The protein localises to the golgi apparatus. Its subcellular location is the trans-Golgi network membrane. It localises to the endosome membrane. Involved in retrograde transport from early and late endosomes to late Golgi, leading to the membrane fusion between late Golgi and endosomal vesicles. The protein is Vacuolar protein sorting-associated protein 53 B of Arabidopsis thaliana (Mouse-ear cress).